Here is a 141-residue protein sequence, read N- to C-terminus: Hemoglobin subunit alpha (141 aa).

The 141-residue stretch at 1–141 folds into the Globin domain; sequence VLSSTDKSNV…VSTVLTSKYR (141 aa). The residue at position 3 (serine 3) is a Phosphoserine. N6-succinyllysine occurs at positions 7 and 11. Lysine 16 bears the N6-acetyllysine; alternate mark. An N6-succinyllysine; alternate modification is found at lysine 16. Tyrosine 24 carries the phosphotyrosine modification. At serine 35 the chain carries Phosphoserine. Position 40 is an N6-succinyllysine (lysine 40). Histidine 58 lines the O2 pocket. Histidine 87 lines the heme b pocket. Position 102 is a phosphoserine (serine 102). Threonine 108 is subject to Phosphothreonine. Serine 124 and serine 131 each carry phosphoserine. Phosphothreonine is present on residues threonine 134 and threonine 137. Serine 138 is modified (phosphoserine).

Belongs to the globin family. As to quaternary structure, heterotetramer of two alpha chains and two beta chains. Red blood cells.

Its function is as follows. Involved in oxygen transport from the lung to the various peripheral tissues. In terms of biological role, hemopressin acts as an antagonist peptide of the cannabinoid receptor CNR1. Hemopressin-binding efficiently blocks cannabinoid receptor CNR1 and subsequent signaling. The polypeptide is Hemoglobin subunit alpha (HBA) (Pteropus alecto (Black flying fox)).